Consider the following 305-residue polypeptide: UDP-3-O-acyl-N-acetylglucosamine deacetylase (305 aa).

Zn(2+)-binding residues include H78, H237, and D241. The Proton donor role is filled by H264.

The protein belongs to the LpxC family. Zn(2+) is required as a cofactor.

The enzyme catalyses a UDP-3-O-[(3R)-3-hydroxyacyl]-N-acetyl-alpha-D-glucosamine + H2O = a UDP-3-O-[(3R)-3-hydroxyacyl]-alpha-D-glucosamine + acetate. The protein operates within glycolipid biosynthesis; lipid IV(A) biosynthesis; lipid IV(A) from (3R)-3-hydroxytetradecanoyl-[acyl-carrier-protein] and UDP-N-acetyl-alpha-D-glucosamine: step 2/6. Its function is as follows. Catalyzes the hydrolysis of UDP-3-O-myristoyl-N-acetylglucosamine to form UDP-3-O-myristoylglucosamine and acetate, the committed step in lipid A biosynthesis. The chain is UDP-3-O-acyl-N-acetylglucosamine deacetylase from Burkholderia ambifaria (strain ATCC BAA-244 / DSM 16087 / CCUG 44356 / LMG 19182 / AMMD) (Burkholderia cepacia (strain AMMD)).